We begin with the raw amino-acid sequence, 72 residues long: UPF0352 protein Patl_3379 (72 aa).

The protein belongs to the UPF0352 family.

This Pseudoalteromonas atlantica (strain T6c / ATCC BAA-1087) protein is UPF0352 protein Patl_3379.